We begin with the raw amino-acid sequence, 321 residues long: Ribose-phosphate pyrophosphokinase (321 aa).

ATP is bound by residues 44–46 and 103–104; these read DGE and RQ. His-137 and Asp-179 together coordinate Mg(2+). Lys-202 is an active-site residue. Residues Arg-204, Asp-228, and 232–236 each bind D-ribose 5-phosphate; that span reads DTAGT.

Belongs to the ribose-phosphate pyrophosphokinase family. Class I subfamily. Homohexamer. Requires Mg(2+) as cofactor.

Its subcellular location is the cytoplasm. It catalyses the reaction D-ribose 5-phosphate + ATP = 5-phospho-alpha-D-ribose 1-diphosphate + AMP + H(+). It functions in the pathway metabolic intermediate biosynthesis; 5-phospho-alpha-D-ribose 1-diphosphate biosynthesis; 5-phospho-alpha-D-ribose 1-diphosphate from D-ribose 5-phosphate (route I): step 1/1. Involved in the biosynthesis of the central metabolite phospho-alpha-D-ribosyl-1-pyrophosphate (PRPP) via the transfer of pyrophosphoryl group from ATP to 1-hydroxyl of ribose-5-phosphate (Rib-5-P). The polypeptide is Ribose-phosphate pyrophosphokinase (Staphylococcus aureus (strain COL)).